Reading from the N-terminus, the 579-residue chain is Phosphatidylinositol/phosphatidylcholine transfer protein SFH9 (579 aa).

Residues 145–319 enclose the CRAL-TRIO domain; that stretch reads EYEEVQQYYP…FLGGNCKCAH (175 aa). Residues 372–419 form a disordered region; it reads DMSSPDGGHVRERESHPEHDKRAQLSNQAEAVGVGRMEQSDSTSPLPN. A compositionally biased stretch (basic and acidic residues) spans 379 to 394; sequence GHVRERESHPEHDKRA. Residues 512–539 are a coiled coil; that stretch reads QEKEDILRDSLDRIKSIEQDLQKTKKAL.

Belongs to the SFH family.

Its subcellular location is the golgi apparatus membrane. The protein localises to the cell membrane. Its function is as follows. Required for transport of secretory proteins from the Golgi complex. Catalyzes the transfer of phosphatidylinositol and phosphatidylcholine between membranes in vitro. The protein is Phosphatidylinositol/phosphatidylcholine transfer protein SFH9 (SFH9) of Arabidopsis thaliana (Mouse-ear cress).